A 378-amino-acid polypeptide reads, in one-letter code: Alginate lyase (378 aa).

Positions 1-28 (MQTPKLIRPTLLSMAILSSMAWATGASA) are cleaved as a signal peptide. Substrate is bound by residues 67-68 (SK), 140-141 (HT), and tyrosine 258. The disordered stretch occupies residues 359–378 (LTKVYDPSHEKGDKGDNDGS). Basic and acidic residues predominate over residues 364 to 378 (DPSHEKGDKGDNDGS).

Belongs to the polysaccharide lyase 5 family.

It is found in the periplasm. The enzyme catalyses Eliminative cleavage of alginate to give oligosaccharides with 4-deoxy-alpha-L-erythro-hex-4-enuronosyl groups at their non-reducing ends and beta-D-mannuronate at their reducing end.. In terms of biological role, catalyzes the depolymerization of alginate by cleaving the beta-1,4 glycosidic bond between two adjacent sugar residues via a beta-elimination mechanism. May serve to degrade mislocalized alginate that is trapped in the periplasmic space. In Pseudomonas syringae pv. syringae (strain B728a), this protein is Alginate lyase.